The sequence spans 290 residues: Agmatinase (290 aa).

Mn(2+) contacts are provided by His-112, Asp-135, His-137, Asp-139, Asp-216, and Asp-218.

Belongs to the arginase family. Agmatinase subfamily. Requires Mn(2+) as cofactor.

It carries out the reaction agmatine + H2O = urea + putrescine. It participates in amine and polyamine biosynthesis; putrescine biosynthesis via agmatine pathway; putrescine from agmatine: step 1/1. In terms of biological role, catalyzes the formation of putrescine from agmatine. This is Agmatinase (speB) from Bacillus cereus (strain ATCC 14579 / DSM 31 / CCUG 7414 / JCM 2152 / NBRC 15305 / NCIMB 9373 / NCTC 2599 / NRRL B-3711).